Here is a 156-residue protein sequence, read N- to C-terminus: Small ribosomal subunit protein uS7 (156 aa).

The protein belongs to the universal ribosomal protein uS7 family. In terms of assembly, part of the 30S ribosomal subunit. Contacts proteins S9 and S11.

Its function is as follows. One of the primary rRNA binding proteins, it binds directly to 16S rRNA where it nucleates assembly of the head domain of the 30S subunit. Is located at the subunit interface close to the decoding center, probably blocks exit of the E-site tRNA. The chain is Small ribosomal subunit protein uS7 from Mannheimia succiniciproducens (strain KCTC 0769BP / MBEL55E).